A 465-amino-acid polypeptide reads, in one-letter code: E3 ubiquitin-protein ligase TRIM15 (465 aa).

The segment at Cys-16 to Gln-61 adopts an RING-type zinc-finger fold. The segment at Leu-78–Leu-119 adopts a B box-type zinc-finger fold. 4 residues coordinate Zn(2+): Cys-83, His-86, Cys-105, and His-111. Positions Tyr-126 to Gln-229 form a coiled coil. In terms of domain architecture, B30.2/SPRY spans Glu-276–Gly-465.

Belongs to the TRIM/RBCC family. Interacts with paxillin/PXN; this interaction recruits TRIM15 to focal adhesions. Interacts with TRIM8; this interaction prevents TRIM8 cytoplasmic translocation.

The protein resides in the cytoplasm. It localises to the nucleus. Its subcellular location is the cell junction. The protein localises to the focal adhesion. The catalysed reaction is S-ubiquitinyl-[E2 ubiquitin-conjugating enzyme]-L-cysteine + [acceptor protein]-L-lysine = [E2 ubiquitin-conjugating enzyme]-L-cysteine + N(6)-ubiquitinyl-[acceptor protein]-L-lysine.. Functionally, E3 ubiquitin ligase that plays a role in several processes including innate antiviral immnity, cell migration and chemotaxis. Acts as a 'Lys-63'-specific ubiquitin ligase for MAPK1/ERK2 and MAPK3/ERK1, promoting their activation by facilitating their interaction with MAP2K1 and MAP2K2. Also plays a role in cell migration and chemotaxis by acting as a stable focal adhesion component upon recruitment by multi-adapter protein paxillin/PXN. Functions in the RIGI-mediated interferon induction pathway upstream or at the level of MAVS. Inhibits NF-kappa-B activation by turnover of 'Lys-63'-linked ubiquitination of MAP3K7/TAK1. Mechanistically, prevents TRIM8 cytoplasmic translocation and thus inhibits TRIM8-mediated 'Lys-63'-linked polyubiquitination of MAP3K7/TAK1 in the cytoplasm. Also has an important regulatory effect on the activation of hepatic stellate cells (HSCs). In Macaca mulatta (Rhesus macaque), this protein is E3 ubiquitin-protein ligase TRIM15 (TRIM15).